Here is a 177-residue protein sequence, read N- to C-terminus: Large ribosomal subunit protein uL6 (177 aa).

This sequence belongs to the universal ribosomal protein uL6 family. In terms of assembly, part of the 50S ribosomal subunit.

In terms of biological role, this protein binds to the 23S rRNA, and is important in its secondary structure. It is located near the subunit interface in the base of the L7/L12 stalk, and near the tRNA binding site of the peptidyltransferase center. The sequence is that of Large ribosomal subunit protein uL6 from Methanothermobacter thermautotrophicus (strain ATCC 29096 / DSM 1053 / JCM 10044 / NBRC 100330 / Delta H) (Methanobacterium thermoautotrophicum).